The chain runs to 187 residues: Elongation factor P (187 aa).

The protein belongs to the elongation factor P family.

It is found in the cytoplasm. It functions in the pathway protein biosynthesis; polypeptide chain elongation. Involved in peptide bond synthesis. Stimulates efficient translation and peptide-bond synthesis on native or reconstituted 70S ribosomes in vitro. Probably functions indirectly by altering the affinity of the ribosome for aminoacyl-tRNA, thus increasing their reactivity as acceptors for peptidyl transferase. This Ruegeria pomeroyi (strain ATCC 700808 / DSM 15171 / DSS-3) (Silicibacter pomeroyi) protein is Elongation factor P.